A 503-amino-acid chain; its full sequence is Glutamate--tRNA ligase (503 aa).

Positions 12–22 match the 'HIGH' region motif; the sequence is PSPTGYLHVGG. Residues 259–263 carry the 'KMSKS' region motif; sequence KLSKR. Lys-262 contributes to the ATP binding site.

Belongs to the class-I aminoacyl-tRNA synthetase family. Glutamate--tRNA ligase type 1 subfamily. Monomer.

It localises to the cytoplasm. The enzyme catalyses tRNA(Glu) + L-glutamate + ATP = L-glutamyl-tRNA(Glu) + AMP + diphosphate. Catalyzes the attachment of glutamate to tRNA(Glu) in a two-step reaction: glutamate is first activated by ATP to form Glu-AMP and then transferred to the acceptor end of tRNA(Glu). In Chloroherpeton thalassium (strain ATCC 35110 / GB-78), this protein is Glutamate--tRNA ligase.